The primary structure comprises 609 residues: Forkhead box protein O (609 aa).

Disordered stretches follow at residues Met1 to Ser89 and Lys181 to Gly263. Thr43 is subject to Phosphothreonine; by PKB/AKT1. Residues Thr62–Gln79 are compositionally biased toward polar residues. Over residues Asn80–Ser89 the composition is skewed to low complexity. The segment at residues Trp94–Gly200 is a DNA-binding region (fork-head). Ser189 is subject to Phosphoserine; by PKB/AKT1. Composition is skewed to polar residues over residues Ala220–Ser229 and Arg254–Gly263. Ser257 is subject to Phosphoserine; by PKB/AKT1. A phosphoserine mark is found at Ser260, Ser261, and Ser266. Disordered stretches follow at residues Ala321–Gly365 and Arg384–Asn411. Positions Thr327–Pro339 are enriched in pro residues. A compositionally biased stretch (polar residues) spans Ser388–Ser397.

In terms of assembly, interacts with melt.

It localises to the cytoplasm. Its subcellular location is the nucleus. Its function is as follows. Transcription factor involved in the regulation of the insulin signaling pathway. Consistently activates both the downstream target Thor\d4EBP and the feedback control target InR. Involved in negative regulation of the cell cycle, modulating cell growth and proliferation. In response to cellular stresses, such as nutrient deprivation or increased levels of reactive oxygen species, foxo is activated and inhibits growth through the action of target genes such as Thor. Foxo activated in the adult fat body can regulate lifespan in adults; an insulin peptide itself may function as one secondary messenger of insulin-regulated aging. Also regulates Lip4, homolog of human acid lipases, thereby acting as a key modulator of lipid metabolism by insulin signaling and integrates insulin responses to glucose and lipid homeostasis. This Drosophila virilis (Fruit fly) protein is Forkhead box protein O.